The sequence spans 131 residues: Superoxide dismutase [Ni] (131 aa).

Positions 1 to 14 (MLSRLFAPKVTVSA) are excised as a propeptide. Residues His-15, Cys-16, and Cys-20 each contribute to the Ni(2+) site.

This sequence belongs to the nickel superoxide dismutase family. In terms of assembly, homohexamer. The hexameric protein has a roughly the shape of a hollow sphere with an outer diameter of 60 angstroms and a large interior cavity. Ni(2+) serves as cofactor.

It localises to the cytoplasm. The catalysed reaction is 2 superoxide + 2 H(+) = H2O2 + O2. This is Superoxide dismutase [Ni] (sodN) from Streptomyces coelicolor (strain ATCC BAA-471 / A3(2) / M145).